The primary structure comprises 271 residues: tRNA pseudouridine synthase A (271 aa).

Asp-54 serves as the catalytic Nucleophile. A substrate-binding site is contributed by Tyr-112.

The protein belongs to the tRNA pseudouridine synthase TruA family. Homodimer.

The catalysed reaction is uridine(38/39/40) in tRNA = pseudouridine(38/39/40) in tRNA. Its function is as follows. Formation of pseudouridine at positions 38, 39 and 40 in the anticodon stem and loop of transfer RNAs. In Acinetobacter baylyi (strain ATCC 33305 / BD413 / ADP1), this protein is tRNA pseudouridine synthase A.